A 754-amino-acid chain; its full sequence is 1,4-alpha-glucan branching enzyme GlgB (754 aa).

Residue aspartate 431 is the Nucleophile of the active site. The active-site Proton donor is glutamate 484.

The protein belongs to the glycosyl hydrolase 13 family. GlgB subfamily. As to quaternary structure, monomer.

The catalysed reaction is Transfers a segment of a (1-&gt;4)-alpha-D-glucan chain to a primary hydroxy group in a similar glucan chain.. It participates in glycan biosynthesis; glycogen biosynthesis. Its function is as follows. Catalyzes the formation of the alpha-1,6-glucosidic linkages in glycogen by scission of a 1,4-alpha-linked oligosaccharide from growing alpha-1,4-glucan chains and the subsequent attachment of the oligosaccharide to the alpha-1,6 position. The polypeptide is 1,4-alpha-glucan branching enzyme GlgB (Prochlorococcus marinus subsp. pastoris (strain CCMP1986 / NIES-2087 / MED4)).